The chain runs to 309 residues: Ferrochelatase (309 aa).

His-187 and Glu-265 together coordinate Fe cation.

The protein belongs to the ferrochelatase family.

Its subcellular location is the cytoplasm. The enzyme catalyses heme b + 2 H(+) = protoporphyrin IX + Fe(2+). Its pathway is porphyrin-containing compound metabolism; protoheme biosynthesis; protoheme from protoporphyrin-IX: step 1/1. Catalyzes the ferrous insertion into protoporphyrin IX. The chain is Ferrochelatase from Nitratiruptor sp. (strain SB155-2).